The following is a 316-amino-acid chain: SHC-transforming protein homolog 1 (316 aa).

The PID domain occupies 16-158 (GVSLSATYLG…LIDVLTTAIN (143 aa)). The SH2 domain occupies 211-307 (WYHGNLSRED…ETSLNLIRPV (97 aa)). The tract at residues 292-316 (SEGRDRETSLNLIRPVPCPGSDDIE) is disordered.

Interacts (via PID domain) with daf-2 (via cytoplasmic domain). Interacts with mek-1; the interaction is independent of mek-1 catalytic activity and is constitutive. Interacts (via N-terminus) with mlk-1 (via NPQY motif when phosphorylated on tyrosine residue). Does not interact with jkk-1 or sek-1. Interacts (via SH2 domain) with svh-2. Interacts with svh-4. As to expression, expressed in hypodermis, intestine, head and tail neurons, pharynx, gonads, vulva and body muscles.

The protein resides in the cytoplasm. It localises to the nucleus. Its subcellular location is the cell membrane. Functionally, scaffold protein which plays an important role in the activation of the JNK pathway composed of mlk-1, mek-1 and kgb-1; by bringing together mek-1 and mlk-1, promotes mlk-1-mediated phosphorylation and activation of mek-1 which in turn phosphorylates kgb-1. In addition, negatively modulates the activation of the insulin/IGF-1-like signaling (IIS) probably by inhibiting the insulin receptor daf-2. Positively regulates the activity of the transcription factor daf-16/FOXO by both inhibiting IIS and activating the JNK pathway. Plays a role in maintaining gonadal basement membrane integrity through activation of the JNK pathway components mek-1 and jnk-1. Involved in the response to several environmental stresses including heavy metal ions (Cu(2+) and Cd(2+)), heat, oxidative and protein misfolding (ER) stresses. Plays a role in gonad and germline development following the L1 diapause. Plays a role in life span and egg laying. Plays a role in axon regeneration after injury. The protein is SHC-transforming protein homolog 1 of Caenorhabditis elegans.